The chain runs to 323 residues: Caspase-1 (323 aa).

A propeptide spanning residues 1-33 (MTDECVTRNYGVGIRSPNGSENRGSFIMADNTD) is cleaved from the precursor. Catalysis depends on residues H154 and C196. A propeptide spanning residues 203–215 (GGITLEKGVTETD) is cleaved from the precursor.

The protein belongs to the peptidase C14A family. As to quaternary structure, heterotetramer that consists of two anti-parallel arranged heterodimers, each one formed by a 22 kDa (p22) and a 13 kDa (p13) subunit.

Its function is as follows. Involved in the activation cascade of caspases responsible for apoptosis execution. Proteolytically cleaves poly(ADP-ribose) polymerase (PARP). Loss of zygotic DCP-1 function causes larval lethality and melanotic tumors. In Drosophila melanogaster (Fruit fly), this protein is Caspase-1 (Dcp-1).